The chain runs to 125 residues: UPF0738 protein GTNG_0708 (125 aa).

It belongs to the UPF0738 family.

This chain is UPF0738 protein GTNG_0708, found in Geobacillus thermodenitrificans (strain NG80-2).